The following is a 436-amino-acid chain: GTPase Der (436 aa).

EngA-type G domains follow at residues 4-167 (PVIA…PKIE) and 176-351 (IRFS…ESHS). GTP is bound by residues 10–17 (GRPNVGKS), 57–61 (DTGGI), 119–122 (NKVD), 182–189 (GRPNVGKS), 229–233 (DTAGM), and 294–297 (NKWD). Residues 352 to 436 (IRIQTNVLND…PIHIIARARD (85 aa)) form the KH-like domain.

It belongs to the TRAFAC class TrmE-Era-EngA-EngB-Septin-like GTPase superfamily. EngA (Der) GTPase family. In terms of assembly, associates with the 50S ribosomal subunit.

In terms of biological role, GTPase that plays an essential role in the late steps of ribosome biogenesis. The sequence is that of GTPase Der from Bacillus anthracis (strain A0248).